Consider the following 179-residue polypeptide: NADH dehydrogenase [ubiquinone] 1 beta subcomplex subunit 9 (179 aa).

N-acetylalanine is present on alanine 2. Residue serine 85 is modified to Phosphoserine. Residues 136 to 162 (EVKQLQEETPPGGPLTEALPPARKEGD) form a disordered region.

This sequence belongs to the complex I LYR family. As to quaternary structure, mammalian complex I is composed of 45 different subunits.

It is found in the mitochondrion inner membrane. In terms of biological role, accessory subunit of the mitochondrial membrane respiratory chain NADH dehydrogenase (Complex I), that is believed to be not involved in catalysis. Complex I functions in the transfer of electrons from NADH to the respiratory chain. The immediate electron acceptor for the enzyme is believed to be ubiquinone. In Pan troglodytes (Chimpanzee), this protein is NADH dehydrogenase [ubiquinone] 1 beta subcomplex subunit 9 (NDUFB9).